Reading from the N-terminus, the 358-residue chain is MEELSQALASSFSVSQELNSTAAPHPRLCQYKSKYSSLEQSERRRQLLELQKSKRLDYVNHARRLAEDDWTGMESGEEENKKDEEEMDIDPSKKLPKRYANQLMLSEWLIDVPSDLGQEWIVVVCPVGKRALIVASRGSTSAYTKSGYCVNRFSSLLPGGNRRNSTTAKDYTILDCIYSEVNQTYYVLDVMCWRGHPFYDCQTDFRFYWMHSKLPEEEGLGEKTKINPFKFVGLKNFPCTPESLCEVLSMDFPFEVDGLLFYHKQTHYSPGSTPLVGWLRPYMVSDILGVAVPAGPLTTKPEYAGHQLQQIIEHKRSQEDTKEKLTHKASENGHYELEHLSTPKLRNPPHSSESLMDN.

The residue at position 1 (methionine 1) is an N-acetylmethionine. 2 disordered regions span residues 1–26 (MEEL…APHP) and 69–90 (DWTG…MDID). The tract at residues 1–65 (MEELSQALAS…LDYVNHARRL (65 aa)) is necessary for interaction with KPNB1 and m3G-cap U1 and U5 snRNP import receptor activity. Residues 1 to 160 (MEELSQALAS…NRFSSLLPGG (160 aa)) are necessary for interaction with XPO1. Residues 7–22 (ALASSFSVSQELNSTA) show a composition bias toward polar residues. The IBB domain occupies 11 to 73 (SFSVSQELNS…RLAEDDWTGM (63 aa)). Serine 75 is subject to Phosphoserine. The interaction with m3G-cap structure stretch occupies residues 128–130 (GKR). The necessary for binding to the m3G-cap structure stretch occupies residues 210–329 (MHSKLPEEEG…DTKEKLTHKA (120 aa)). Residues 315–341 (KRSQEDTKEKLTHKASENGHYELEHLS) show a composition bias toward basic and acidic residues. Residues 315-358 (KRSQEDTKEKLTHKASENGHYELEHLSTPKLRNPPHSSESLMDN) form a disordered region. Polar residues predominate over residues 349 to 358 (PHSSESLMDN). Residue serine 351 is modified to Phosphoserine.

It belongs to the snurportin family. As to quaternary structure, component of an import snRNP complex composed of KPNB1, SNUPN, SMN1 and ZNF259. Component of a nuclear export receptor complex composed of KPNB1, Ran, SNUPN and XPO1. Found in a trimeric export complex with SNUPN, Ran and XPO1. Interacts (via IBB domain) with KPNB1; the interaction is direct. Interacts with DDX20, IPO7, SMN1, SNRPB and XPO1. Interacts directly with XPO1. Its interaction with XPO1 and binding to m3G-cap U snRNPs appears to be mutually exclusive. Can form homomers.

The protein resides in the nucleus. It localises to the cytoplasm. In terms of biological role, functions as an U snRNP-specific nuclear import adapter. Involved in the trimethylguanosine (m3G)-cap-dependent nuclear import of U snRNPs. Binds specifically to the terminal m3G-cap U snRNAs. The chain is Snurportin-1 (Snupn) from Mus musculus (Mouse).